Here is a 384-residue protein sequence, read N- to C-terminus: 1-deoxy-D-xylulose 5-phosphate reductoisomerase (384 aa).

Residues Thr-10, Gly-11, Ser-12, Ile-13, Arg-37, Asn-38, and Asn-124 each contribute to the NADPH site. Residue Lys-125 coordinates 1-deoxy-D-xylulose 5-phosphate. Glu-126 contacts NADPH. Residue Asp-150 coordinates Mn(2+). Positions 151, 152, 176, and 199 each coordinate 1-deoxy-D-xylulose 5-phosphate. Position 152 (Glu-152) interacts with Mn(2+). Gly-205 is an NADPH binding site. 1-deoxy-D-xylulose 5-phosphate-binding residues include Ser-212, Asn-217, Lys-218, and Glu-221. Glu-221 contributes to the Mn(2+) binding site.

It belongs to the DXR family. Mg(2+) is required as a cofactor. The cofactor is Mn(2+).

The enzyme catalyses 2-C-methyl-D-erythritol 4-phosphate + NADP(+) = 1-deoxy-D-xylulose 5-phosphate + NADPH + H(+). The protein operates within isoprenoid biosynthesis; isopentenyl diphosphate biosynthesis via DXP pathway; isopentenyl diphosphate from 1-deoxy-D-xylulose 5-phosphate: step 1/6. Its function is as follows. Catalyzes the NADPH-dependent rearrangement and reduction of 1-deoxy-D-xylulose-5-phosphate (DXP) to 2-C-methyl-D-erythritol 4-phosphate (MEP). The protein is 1-deoxy-D-xylulose 5-phosphate reductoisomerase of Clostridium perfringens (strain SM101 / Type A).